A 72-amino-acid chain; its full sequence is Translation initiation factor IF-1 (72 aa).

The region spanning 1–72 (MAKEDVIEMQ…SKGRIVFRAR (72 aa)) is the S1-like domain.

Belongs to the IF-1 family. Component of the 30S ribosomal translation pre-initiation complex which assembles on the 30S ribosome in the order IF-2 and IF-3, IF-1 and N-formylmethionyl-tRNA(fMet); mRNA recruitment can occur at any time during PIC assembly.

The protein localises to the cytoplasm. Functionally, one of the essential components for the initiation of protein synthesis. Stabilizes the binding of IF-2 and IF-3 on the 30S subunit to which N-formylmethionyl-tRNA(fMet) subsequently binds. Helps modulate mRNA selection, yielding the 30S pre-initiation complex (PIC). Upon addition of the 50S ribosomal subunit IF-1, IF-2 and IF-3 are released leaving the mature 70S translation initiation complex. The chain is Translation initiation factor IF-1 from Photobacterium profundum (strain SS9).